The following is a 177-amino-acid chain: ATP synthase subunit delta (177 aa).

This sequence belongs to the ATPase delta chain family. As to quaternary structure, F-type ATPases have 2 components, F(1) - the catalytic core - and F(0) - the membrane proton channel. F(1) has five subunits: alpha(3), beta(3), gamma(1), delta(1), epsilon(1). F(0) has three main subunits: a(1), b(2) and c(10-14). The alpha and beta chains form an alternating ring which encloses part of the gamma chain. F(1) is attached to F(0) by a central stalk formed by the gamma and epsilon chains, while a peripheral stalk is formed by the delta and b chains.

The protein localises to the cell inner membrane. In terms of biological role, f(1)F(0) ATP synthase produces ATP from ADP in the presence of a proton or sodium gradient. F-type ATPases consist of two structural domains, F(1) containing the extramembraneous catalytic core and F(0) containing the membrane proton channel, linked together by a central stalk and a peripheral stalk. During catalysis, ATP synthesis in the catalytic domain of F(1) is coupled via a rotary mechanism of the central stalk subunits to proton translocation. This protein is part of the stalk that links CF(0) to CF(1). It either transmits conformational changes from CF(0) to CF(1) or is implicated in proton conduction. This is ATP synthase subunit delta from Shigella dysenteriae serotype 1 (strain Sd197).